Consider the following 352-residue polypeptide: Photosystem II D2 protein (352 aa).

Residue Thr2 is modified to N-acetylthreonine. Residue Thr2 is modified to Phosphothreonine. The helical transmembrane segment at 40–60 threads the bilayer; the sequence is CAYFALGGWLTGTTFVTSWYT. His117 lines the chlorophyll a pocket. A helical membrane pass occupies residues 124–140; the sequence is GFMLRQFEIARAVKIRP. Residues Gln129 and Asn142 each contribute to the pheophytin a site. Residues 152–165 traverse the membrane as a helical segment; that stretch reads VFVSVFLIYPLGQA. Position 197 (His197) interacts with chlorophyll a. The chain crosses the membrane as a helical span at residues 207–227; it reads AALLCAIHGATVENTLFEDGD. A plastoquinone contacts are provided by His214 and Phe261. Position 214 (His214) interacts with Fe cation. His268 serves as a coordination point for Fe cation. Residues 278-294 traverse the membrane as a helical segment; it reads GLWMSALGVVGLALNLR.

It belongs to the reaction center PufL/M/PsbA/D family. As to quaternary structure, PSII is composed of 1 copy each of membrane proteins PsbA, PsbB, PsbC, PsbD, PsbE, PsbF, PsbH, PsbI, PsbJ, PsbK, PsbL, PsbM, PsbT, PsbX, PsbY, PsbZ, Psb30/Ycf12, at least 3 peripheral proteins of the oxygen-evolving complex and a large number of cofactors. It forms dimeric complexes. It depends on The D1/D2 heterodimer binds P680, chlorophylls that are the primary electron donor of PSII, and subsequent electron acceptors. It shares a non-heme iron and each subunit binds pheophytin, quinone, additional chlorophylls, carotenoids and lipids. There is also a Cl(-1) ion associated with D1 and D2, which is required for oxygen evolution. The PSII complex binds additional chlorophylls, carotenoids and specific lipids. as a cofactor.

The protein localises to the plastid. Its subcellular location is the chloroplast thylakoid membrane. The enzyme catalyses 2 a plastoquinone + 4 hnu + 2 H2O = 2 a plastoquinol + O2. Photosystem II (PSII) is a light-driven water:plastoquinone oxidoreductase that uses light energy to abstract electrons from H(2)O, generating O(2) and a proton gradient subsequently used for ATP formation. It consists of a core antenna complex that captures photons, and an electron transfer chain that converts photonic excitation into a charge separation. The D1/D2 (PsbA/PsbD) reaction center heterodimer binds P680, the primary electron donor of PSII as well as several subsequent electron acceptors. D2 is needed for assembly of a stable PSII complex. This chain is Photosystem II D2 protein, found in Tupiella akineta (Green alga).